The sequence spans 441 residues: GTPase Der (441 aa).

2 consecutive EngA-type G domains span residues 4 to 169 (PIVA…PEGS) and 178 to 353 (PKVA…DAQT). GTP is bound by residues 10-17 (GRPNVGKS), 57-61 (DTGGI), 120-123 (NKVD), 184-191 (GKPNVGKS), 231-235 (DTAGL), and 296-299 (NKWD). Residues 354-438 (MRIPTGVLNE…SIRFINRERK (85 aa)) form the KH-like domain.

Belongs to the TRAFAC class TrmE-Era-EngA-EngB-Septin-like GTPase superfamily. EngA (Der) GTPase family. As to quaternary structure, associates with the 50S ribosomal subunit.

In terms of biological role, GTPase that plays an essential role in the late steps of ribosome biogenesis. The chain is GTPase Der from Lachnospira eligens (strain ATCC 27750 / DSM 3376 / VPI C15-48 / C15-B4) (Eubacterium eligens).